A 646-amino-acid polypeptide reads, in one-letter code: Cartilage acidic protein 1 (646 aa).

A signal peptide spans 1–28 (MAPSADPGMVRMALLLLPPLWLLPLTGG). The FG-GAP 1; atypical repeat unit spans residues 47 to 89 (DYDSNPTQLNYGVAVTDVDHDGDFEIVVAGYTGPNLVLKYNRA). The FG-GAP 2; atypical repeat unit spans residues 106-148 (YALRDRQGNAIGVTACDIDGDGREEIYFLNTNNAFSGVATYTD). The stretch at 284-334 (AGVDDPHQHGRGVALADFNRDGKVDIVYGNWNGPHRLYLQMSAHGKVRFRD) is one FG-GAP 3; atypical repeat. The FG-GAP 4; atypical repeat unit spans residues 396–438 (GDALEPEGRGTGGVVTDFDGDGMLDLILSHGESMAQPLSVFRG). An EGF-like domain is found at 560–606 (DTNECIQFPFVCPRDKPVCVNTYGSYRCRTNKRCNRGYEPNEDGTAC). Intrachain disulfides connect C564/C578, C571/C587, and C593/C606.

The protein localises to the secreted. Its subcellular location is the extracellular space. The protein resides in the extracellular matrix. This is Cartilage acidic protein 1 (Crtac1) from Mus musculus (Mouse).